We begin with the raw amino-acid sequence, 137 residues long: Nucleoside diphosphate kinase (137 aa).

ATP is bound by residues Lys9, Phe57, Arg85, Thr91, Arg102, and Asn112. His115 acts as the Pros-phosphohistidine intermediate in catalysis.

The protein belongs to the NDK family. In terms of assembly, homotetramer. It depends on Mg(2+) as a cofactor.

It is found in the cytoplasm. It catalyses the reaction a 2'-deoxyribonucleoside 5'-diphosphate + ATP = a 2'-deoxyribonucleoside 5'-triphosphate + ADP. It carries out the reaction a ribonucleoside 5'-diphosphate + ATP = a ribonucleoside 5'-triphosphate + ADP. In terms of biological role, major role in the synthesis of nucleoside triphosphates other than ATP. The ATP gamma phosphate is transferred to the NDP beta phosphate via a ping-pong mechanism, using a phosphorylated active-site intermediate. This chain is Nucleoside diphosphate kinase, found in Thermus thermophilus (strain ATCC BAA-163 / DSM 7039 / HB27).